Consider the following 310-residue polypeptide: Tagatose-6-phosphate kinase (310 aa).

The protein belongs to the carbohydrate kinase PfkB family. LacC subfamily.

The catalysed reaction is D-tagatofuranose 6-phosphate + ATP = D-tagatofuranose 1,6-bisphosphate + ADP + H(+). It functions in the pathway carbohydrate metabolism; D-tagatose 6-phosphate degradation; D-glyceraldehyde 3-phosphate and glycerone phosphate from D-tagatose 6-phosphate: step 1/2. This chain is Tagatose-6-phosphate kinase, found in Streptococcus agalactiae serotype V (strain ATCC BAA-611 / 2603 V/R).